The following is a 267-amino-acid chain: L-aspartate dehydrogenase (267 aa).

Residues A124 and N190 each coordinate NAD(+). The active site involves H218.

Belongs to the L-aspartate dehydrogenase family.

The enzyme catalyses L-aspartate + NADP(+) + H2O = oxaloacetate + NH4(+) + NADPH + H(+). The catalysed reaction is L-aspartate + NAD(+) + H2O = oxaloacetate + NH4(+) + NADH + H(+). It participates in cofactor biosynthesis; NAD(+) biosynthesis; iminoaspartate from L-aspartate (dehydrogenase route): step 1/1. Its function is as follows. Specifically catalyzes the NAD or NADP-dependent dehydrogenation of L-aspartate to iminoaspartate. The polypeptide is L-aspartate dehydrogenase (Methanococcus maripaludis (strain DSM 14266 / JCM 13030 / NBRC 101832 / S2 / LL)).